We begin with the raw amino-acid sequence, 110 residues long: Large ribosomal subunit protein uL22 (110 aa).

The protein belongs to the universal ribosomal protein uL22 family. As to quaternary structure, part of the 50S ribosomal subunit.

In terms of biological role, this protein binds specifically to 23S rRNA; its binding is stimulated by other ribosomal proteins, e.g. L4, L17, and L20. It is important during the early stages of 50S assembly. It makes multiple contacts with different domains of the 23S rRNA in the assembled 50S subunit and ribosome. Functionally, the globular domain of the protein is located near the polypeptide exit tunnel on the outside of the subunit, while an extended beta-hairpin is found that lines the wall of the exit tunnel in the center of the 70S ribosome. This chain is Large ribosomal subunit protein uL22, found in Pseudomonas aeruginosa (strain LESB58).